We begin with the raw amino-acid sequence, 420 residues long: Tubulin-specific chaperone C (420 aa).

Residues 9-142 (NNNNDEENSK…QIDKSKEKYM (134 aa)) adopt a coiled-coil conformation. Over residues 31 to 49 (KQRLQSKLEKREISNKEQI) the composition is skewed to basic and acidic residues. Disordered stretches follow at residues 31 to 52 (KQRLQSKLEKREISNKEQIDQS), 138 to 193 (KEKY…NNNK), and 222 to 257 (EIGNQDINNNNNNNNNNNNNNNNNNNNNNNNNNNNN). Composition is skewed to low complexity over residues 172–192 (ETFNNNNNNNNDNDNTDNNNN) and 228–257 (INNNNNNNNNNNNNNNNNNNNNNNNNNNNN). Positions 216-366 (PPKKEEEIGN…LKQQQQQQQQ (151 aa)) constitute a C-CAP/cofactor C-like domain.

This sequence belongs to the TBCC family. Supercomplex made of cofactors A to E. Cofactors A and D function by capturing and stabilizing tubulin in a quasi-native conformation. Cofactor E binds to the cofactor D-tubulin complex; interaction with cofactor C then causes the release of tubulin polypeptides that are committed to the native state.

Tubulin-folding protein; involved in the final step of the tubulin folding pathway. The protein is Tubulin-specific chaperone C (tbcc) of Dictyostelium discoideum (Social amoeba).